We begin with the raw amino-acid sequence, 569 residues long: Spermatogenesis-associated protein 16 (569 aa).

The span at 67–92 (KGIKEKQSNDLEKAAFKRKAEGEEKP) shows a compositional bias: basic and acidic residues. A disordered region spans residues 67 to 96 (KGIKEKQSNDLEKAAFKRKAEGEEKPTRKK).

Belongs to the SPATA16 family. As to expression, expressed in testis.

It is found in the golgi apparatus. It localises to the cytoplasmic vesicle. The protein resides in the secretory vesicle. The protein localises to the acrosome. Its function is as follows. Essential for spermiogenesis and male fertility. Involved in the formation of sperm acrosome during spermatogenesis. This is Spermatogenesis-associated protein 16 (SPATA16) from Homo sapiens (Human).